Here is a 205-residue protein sequence, read N- to C-terminus: Glycerol-3-phosphate acyltransferase (205 aa).

Transmembrane regions (helical) follow at residues 4-24 (IAPGMILLAYLCGSISSAILV), 80-100 (PFWLGLIAIAACLGHIWPIFF), 112-132 (FGAIAPIGWDLTGVMAGTWLL), and 138-158 (GYSSLGAIVSALVAPFYVWWF).

It belongs to the PlsY family. As to quaternary structure, probably interacts with PlsX.

The protein localises to the cell inner membrane. It catalyses the reaction an acyl phosphate + sn-glycerol 3-phosphate = a 1-acyl-sn-glycero-3-phosphate + phosphate. It functions in the pathway lipid metabolism; phospholipid metabolism. Catalyzes the transfer of an acyl group from acyl-phosphate (acyl-PO(4)) to glycerol-3-phosphate (G3P) to form lysophosphatidic acid (LPA). This enzyme utilizes acyl-phosphate as fatty acyl donor, but not acyl-CoA or acyl-ACP. The sequence is that of Glycerol-3-phosphate acyltransferase from Cronobacter sakazakii (strain ATCC BAA-894) (Enterobacter sakazakii).